The following is a 445-amino-acid chain: Glucose-6-phosphate isomerase (445 aa).

Glu287 functions as the Proton donor in the catalytic mechanism. Active-site residues include His308 and Lys422.

Belongs to the GPI family.

Its subcellular location is the cytoplasm. The catalysed reaction is alpha-D-glucose 6-phosphate = beta-D-fructose 6-phosphate. The protein operates within carbohydrate biosynthesis; gluconeogenesis. Its pathway is carbohydrate degradation; glycolysis; D-glyceraldehyde 3-phosphate and glycerone phosphate from D-glucose: step 2/4. Its function is as follows. Catalyzes the reversible isomerization of glucose-6-phosphate to fructose-6-phosphate. This Bacteroides fragilis (strain ATCC 25285 / DSM 2151 / CCUG 4856 / JCM 11019 / LMG 10263 / NCTC 9343 / Onslow / VPI 2553 / EN-2) protein is Glucose-6-phosphate isomerase.